The chain runs to 370 residues: Cysteine synthase 1 (370 aa).

The transit peptide at 1–16 (MFRQSVRRFATAALRS) directs the protein to the mitochondrion. Residue K73 is modified to N6-(pyridoxal phosphate)lysine. Pyridoxal 5'-phosphate-binding positions include N103, 209–213 (GTGGT), and S308.

This sequence belongs to the cysteine synthase/cystathionine beta-synthase family. It depends on pyridoxal 5'-phosphate as a cofactor.

The protein localises to the mitochondrion. It catalyses the reaction O-succinyl-L-serine + hydrogen sulfide = L-cysteine + succinate. The enzyme catalyses O-acetyl-L-serine + hydrogen sulfide = L-cysteine + acetate. The protein operates within amino-acid biosynthesis; L-cysteine biosynthesis; L-cysteine from L-serine: step 2/2. Its function is as follows. Catalyzes the conversion of O-succinyl-L-serine into cysteine, the last step in the cysteine biosynthesis pathway. Can also use O-acetyl-L-serine. The polypeptide is Cysteine synthase 1 (Emericella nidulans (strain FGSC A4 / ATCC 38163 / CBS 112.46 / NRRL 194 / M139) (Aspergillus nidulans)).